The primary structure comprises 481 residues: G-protein coupled receptor 37-like 1 (481 aa).

An N-terminal signal peptide occupies residues 1–25; it reads MRWLWPLAVSLAVILAVGLSRVSGG. Disordered regions lie at residues 26 to 58 and 70 to 108; these read APLH…GVQQ and PIHP…NLTG. Topologically, residues 26-134 are extracellular; it reads APLHLGRHRA…ESSYSAYAIM (109 aa). O-linked (GalNAc...) threonine glycans are attached at residues T79 and T85. An O-linked (GalNAc...) serine glycan is attached at S86. O-linked (GalNAc...) threonine glycosylation is present at T95. N105 carries N-linked (GlcNAc...) asparagine glycosylation. The O-linked (GalNAc...) threonine glycan is linked to T107. Residues 135 to 155 form a helical membrane-spanning segment; it reads LLALVVFAVGIVGNLSVMCIV. Residues 156-167 lie on the Cytoplasmic side of the membrane; that stretch reads WHSYYLKSAWNS. Residues 168-188 traverse the membrane as a helical segment; it reads ILASLALWDFLVLFFCLPIVI. Residues 189-205 are Extracellular-facing; that stretch reads FNEITKQRLLGDVSCRA. The cysteines at positions 203 and 286 are disulfide-linked. A helical transmembrane segment spans residues 206–226; it reads VPFMEVSSLGVTTFSLCALGI. Over 227–251 the chain is Cytoplasmic; that stretch reads DRFHVATSTLPKVRPIERCQSILAK. The helical transmembrane segment at 252–272 threads the bilayer; sequence LAVIWVGSMTLAVPELLLWQL. Residues 273–310 are Extracellular-facing; sequence AQEPAPTMGTLDSCIMKPSASLPESLYSLVMTYQNARM. Residues 311-331 traverse the membrane as a helical segment; sequence WWYFGCYFCLPILFTVTCQLV. The Cytoplasmic portion of the chain corresponds to 332-361; sequence TWRVRGPPGRKSECRASKHEQCESQLNSTV. Residues 362 to 382 form a helical membrane-spanning segment; the sequence is VGLTVVYAFCTLPENVCNIVV. Residues 383 to 398 lie on the Extracellular side of the membrane; sequence AYLSTELTRQTLDLLG. The helical transmembrane segment at 399 to 419 threads the bilayer; the sequence is LINQFSTFFKGAITPVLLLCI. Topologically, residues 420–481 are cytoplasmic; sequence CRPLGQAFLD…PPLLPLGTPC (62 aa). S471 is modified (phosphoserine). T479 is modified (phosphothreonine).

The protein belongs to the G-protein coupled receptor 1 family. Interacts with the PTCH1 receptor. Post-translationally, O-glycosylated. Undergoes metalloprotease-mediated cleavage which reduces its constitutive activity. In terms of processing, ubiquitinated. Expressed in primary cortical astrocytes (at protein level). Expressed in the central nervous system.

The protein localises to the cell membrane. It localises to the cell projection. Its subcellular location is the cilium membrane. Its function is as follows. G-protein coupled receptor. Has been shown to bind the neuroprotective and glioprotective factor prosaposin (PSAP), leading to endocytosis followed by an ERK phosphorylation cascade. However, other studies have shown that prosaposin does not increase activity. It has been suggested that GPR37L1 is a constitutively active receptor which signals through the guanine nucleotide-binding protein G(s) subunit alpha. Participates in the regulation of postnatal cerebellar development by modulating the Shh pathway. Regulates baseline blood pressure in females and protects against cardiovascular stress in males. Mediates inhibition of astrocyte glutamate transporters and reduction in neuronal N-methyl-D-aspartate receptor activity. This Homo sapiens (Human) protein is G-protein coupled receptor 37-like 1 (GPR37L1).